Consider the following 1281-residue polypeptide: Angiotensin-converting enzyme (1281 aa).

The signal sequence occupies residues 1-17; that stretch reads MPAALGLLLPWLSLVGA. At 18-1241 the chain is on the extracellular side; that stretch reads LQPGLEPPQS…MSVGTKQATA (1224 aa). Peptidase M2 domains are found at residues 28–610 and 629–1208; these read DPTE…LGWP and IVDE…LGWP. N-linked (GlcNAc...) asparagine glycans are attached at residues Asn-42, Asn-62, Asn-80, Asn-99, and Asn-148. Cysteines 145 and 151 form a disulfide. Chloride is bound at residue Tyr-217. Asn-304 carries an N-linked (GlcNAc...) asparagine glycan. A disulfide bridge connects residues Cys-345 and Cys-363. Residue His-376 participates in Zn(2+) binding. Glu-377 serves as the catalytic Proton acceptor 1. Residues His-380 and Glu-404 each coordinate Zn(2+). Asn-495 carries an N-linked (GlcNAc...) asparagine glycan. The active-site Proton donor 1 is His-506. Arg-515 is a chloride binding site. Cys-531 and Cys-543 are disulfide-bonded. N-linked (GlcNAc...) asparagine glycosylation is found at Asn-535, Asn-573, Asn-601, Asn-643, Asn-663, and Asn-746. Cysteines 743 and 749 form a disulfide. Chloride-binding residues include Arg-777 and Tyr-815. A disulfide bond links Cys-943 and Cys-961. His-974 contributes to the Zn(2+) binding site. Glu-975 (proton acceptor 2) is an active-site residue. Zn(2+) is bound by residues His-978 and Glu-1002. Residues Trp-1076 and Arg-1080 each contribute to the chloride site. His-1104 (proton donor 2) is an active-site residue. Chloride is bound at residue Arg-1113. A disulfide bridge connects residues Cys-1129 and Cys-1141. Asn-1177 is a glycosylation site (N-linked (GlcNAc...) asparagine). The segment at 1201–1240 is juxtamembrane stalk; that stretch reads NGEVLGWPEYSWTPYAVTEFHAATDTADFLGMSVGTKQAT. The chain crosses the membrane as a helical span at residues 1242 to 1262; the sequence is GAWVLLALALVFLITSIFLGV. Topologically, residues 1263–1281 are cytoplasmic; it reads KLFSSRRKAFKSSSEMELK.

It belongs to the peptidase M2 family. The cofactor is Zn(2+). Chloride serves as cofactor.

Its subcellular location is the cell membrane. The protein localises to the cytoplasm. It catalyses the reaction Release of a C-terminal dipeptide, oligopeptide-|-Xaa-Yaa, when Xaa is not Pro, and Yaa is neither Asp nor Glu. Thus, conversion of angiotensin I to angiotensin II, with increase in vasoconstrictor activity, but no action on angiotensin II.. The catalysed reaction is angiotensin I + H2O = L-histidyl-L-leucine + angiotensin II. The enzyme catalyses bradykinin + H2O = L-Phe-L-Arg + bradykinin(1-7). It carries out the reaction substance P + H2O = substance P(1-9) + L-Leu-L-Met-NH2. It catalyses the reaction substance P + H2O = substance P(1-8) + Gly-L-Leu-L-Met-NH2. The catalysed reaction is substance P + H2O = L-Phe-L-Phe-Gly-L-Leu-L-Met-NH2 + substance P(1-6). The enzyme catalyses neurotensin + H2O = neurotensin(1-11) + L-isoleucyl-L-leucine. It carries out the reaction goralatide + H2O = N-acetyl-L-seryl-L-aspartate + L-lysyl-L-proline. It catalyses the reaction Met-enkephalin + H2O = L-phenylalanyl-L-methionine + L-tyrosylglycylglycine. The catalysed reaction is Leu-enkephalin + H2O = L-tyrosylglycylglycine + L-phenylalanyl-L-leucine. The enzyme catalyses Met-enkephalin-Arg-Phe + H2O = L-arginyl-L-phenylalanine + Met-enkephalin. In terms of biological role, dipeptidyl carboxypeptidase that removes dipeptides from the C-terminus of a variety of circulating hormones, such as angiotensin I, bradykinin or enkephalins, thereby playing a key role in the regulation of blood pressure, electrolyte homeostasis or synaptic plasticity. Composed of two similar catalytic domains, each possessing a functional active site, with different selectivity for substrates. Plays a major role in the angiotensin-renin system that regulates blood pressure and sodium retention by the kidney by converting angiotensin I to angiotensin II, resulting in an increase of the vasoconstrictor activity of angiotensin. Also able to inactivate bradykinin, a potent vasodilator, and therefore enhance the blood pressure response. Acts as a regulator of synaptic transmission by mediating cleavage of neuropeptide hormones, such as substance P, neurotensin or enkephalins. Catalyzes degradation of different enkephalin neuropeptides (Met-enkephalin, Leu-enkephalin, Met-enkephalin-Arg-Phe and possibly Met-enkephalin-Arg-Gly-Leu). Also acts as a regulator of hematopoietic stem cell differentiation by mediating degradation of hemoregulatory peptide N-acetyl-SDKP (AcSDKP). The sequence is that of Angiotensin-converting enzyme from Gallus gallus (Chicken).